We begin with the raw amino-acid sequence, 520 residues long: Pleckstrin homology domain-containing family A member 8 (520 aa).

The PH domain occupies 1–93 (MEGVLYKWTN…WLVALGSAKA (93 aa)). Residue threonine 139 is modified to Phosphothreonine. Serine 145 carries the post-translational modification Phosphoserine. A Phosphothreonine modification is found at threonine 153. A compositionally biased stretch (polar residues) spans 255 to 268 (ISSEENTDGNTTVQ). The interval 255 to 303 (ISSEENTDGNTTVQGERMKEDGEENLESHDRDLAQPGSDSVCSPESPWE) is disordered. Positions 270-287 (ERMKEDGEENLESHDRDL) are enriched in basic and acidic residues. The segment at 311–520 (TFFSTMNTSF…IHGLESDEVV (210 aa)) is glycolipid transfer protein homology domain.

Homodimer. Interacts with ARF1; the interaction together with phosphatidylinositol 4-phosphate binding is required for FAPP2 GlcCer transfer ability.

The protein localises to the golgi apparatus. It localises to the trans-Golgi network membrane. Its subcellular location is the membrane. Functionally, cargo transport protein that is required for apical transport from the trans-Golgi network (TGN). Transports AQP2 from the trans-Golgi network (TGN) to sites of AQP2 phosphorylation. Mediates the non-vesicular transport of glucosylceramide (GlcCer) from the trans-Golgi network (TGN) to the plasma membrane and plays a pivotal role in the synthesis of complex glycosphingolipids. Binding of both phosphatidylinositol 4-phosphate (PIP) and ARF1 are essential for the GlcCer transfer ability. Also required for primary cilium formation, possibly by being involved in the transport of raft lipids to the apical membrane, and for membrane tubulation. The chain is Pleckstrin homology domain-containing family A member 8 (Plekha8) from Rattus norvegicus (Rat).